Here is a 116-residue protein sequence, read N- to C-terminus: Large ribosomal subunit protein bL19 (116 aa).

The protein belongs to the bacterial ribosomal protein bL19 family.

Functionally, this protein is located at the 30S-50S ribosomal subunit interface and may play a role in the structure and function of the aminoacyl-tRNA binding site. The sequence is that of Large ribosomal subunit protein bL19 from Blochmanniella pennsylvanica (strain BPEN).